We begin with the raw amino-acid sequence, 219 residues long: Lipoprotein-releasing system ATP-binding protein LolD (219 aa).

The ABC transporter domain maps to 5-219 (LKAGDIFKTY…KVVMQDGVII (215 aa)). 37–44 (GASGAGKS) provides a ligand contact to ATP.

This sequence belongs to the ABC transporter superfamily. Lipoprotein translocase (TC 3.A.1.125) family. In terms of assembly, the complex is composed of two ATP-binding proteins (LolD) and two transmembrane proteins (LolC and LolE).

Its subcellular location is the cell inner membrane. In terms of biological role, part of the ABC transporter complex LolCDE involved in the translocation of mature outer membrane-directed lipoproteins, from the inner membrane to the periplasmic chaperone, LolA. Responsible for the formation of the LolA-lipoprotein complex in an ATP-dependent manner. This Cytophaga hutchinsonii (strain ATCC 33406 / DSM 1761 / CIP 103989 / NBRC 15051 / NCIMB 9469 / D465) protein is Lipoprotein-releasing system ATP-binding protein LolD.